Reading from the N-terminus, the 1133-residue chain is Sterol regulatory element-binding protein 2 (1133 aa).

Residues 1–50 (MDENSELGGLETMETLTELGDELTLGDIDEMLQFVSNQVGEFSDLFSEQL) form a transcriptional activation (acidic) region. The Cytoplasmic portion of the chain corresponds to 1 to 473 (MDENSELGGL…VALGMVDRSR (473 aa)). The span at 56–65 (GGGGGSGSGG) shows a compositional bias: gly residues. Residues 56-136 (GGGGGSGSGG…PQPQPQPPAQ (81 aa)) form a disordered region. Residues 92–109 (PLSTFSPSSTSPQAPALQ) are compositionally biased toward low complexity. Over residues 114–134 (PTPPRATPVLQPRPQPQPQPP) the composition is skewed to pro residues. Residues 229 to 483 (QQVPVLVQPQ…ILLCVLTFLG (255 aa)) are interaction with LMNA. The bHLH domain occupies 322–372 (ERRTTHNIIEKRYRSSINDKIIELKDLVMGTDAKMHKSGVLRKAIDYIKYL). Residues 372–393 (LQQVNHKLRQENMVLKLANQKN) are leucine-zipper. A Glycyl lysine isopeptide (Lys-Gly) (interchain with G-Cter in SUMO2) cross-link involves residue Lys-456. Residues 474-494 (ILLCVLTFLGLSFNPLTSLLQ) form a helical membrane-spanning segment. The Lumenal segment spans residues 495–525 (WGGAHNPDQHPYSGSGRNVLSLESGSGGWFD). The helical transmembrane segment at 526 to 546 (WMMPTLLLWLLNGVIVLSVFV) threads the bilayer. Over 547 to 1133 (KLLVHGEPVI…LGGGTAIAAS (587 aa)) the chain is Cytoplasmic. Position 1090 is a phosphoserine (Ser-1090).

The protein belongs to the SREBP family. In terms of assembly, homodimer; efficient DNA binding of the soluble transcription factor fragment requires dimerization with another bHLH protein. Interacts with LMNA. Forms a tight complex with SCAP, the SCAP-SREBP complex, in the endoplasmic reticulum membrane and the Golgi apparatus. Interacts with PAQR3; the interaction anchors the SCAP-SREBP complex to the Golgi apparatus in low cholesterol conditions. Interacts (via C-terminal domain) with RNF139. In terms of processing, processed in the Golgi apparatus, releasing the protein from the membrane. At low cholesterol the SCAP-SREBP complex is recruited into COPII vesicles for export from the endoplasmic reticulum. In the Golgi, complex SREBPs are cleaved sequentially by site-1 (MBTPS1, S1P) and site-2 (MBTPS2, S2P) proteases. The first cleavage by site-1 protease occurs within the luminal loop, the second cleavage by site-2 protease occurs within the first transmembrane domain, releasing the transcription factor from the Golgi membrane. Apoptosis triggers cleavage by the cysteine proteases caspase-3 and caspase-7. Cleavage and activation is induced by mediated cholesterol efflux. Post-translationally, phosphorylated by AMPK, leading to suppress protein processing and nuclear translocation, and repress target gene expression. SCAP-free SREBF2 is ubiquitinated by the BCR(ARMC5) complex, leading to its degradation. In terms of processing, ubiquitinated; the nuclear form has a rapid turnover and is rapidly ubiquitinated and degraded by the proteasome in the nucleus.

Its subcellular location is the endoplasmic reticulum membrane. The protein resides in the golgi apparatus membrane. It is found in the cytoplasmic vesicle. The protein localises to the COPII-coated vesicle membrane. It localises to the nucleus. Activation by cleavage is down-regulated upon activation of SIRT3-dependent PRKAA1/AMPK-alpha signaling cascade which leads to inhibition of ATP-consuming lipogenesis to restore cellular energy balance. In terms of biological role, precursor of the transcription factor form (Processed sterol regulatory element-binding protein 2), which is embedded in the endoplasmic reticulum membrane. Low sterol concentrations promote processing of this form, releasing the transcription factor form that translocates into the nucleus and activates transcription of genes involved in cholesterol biosynthesis. Its function is as follows. Key transcription factor that regulates expression of genes involved in cholesterol biosynthesis. Binds to the sterol regulatory element 1 (SRE-1) (5'-ATCACCCCAC-3'). Has dual sequence specificity binding to both an E-box motif (5'-ATCACGTGA-3') and to SRE-1 (5'-ATCACCCCAC-3'). Regulates transcription of genes related to cholesterol synthesis pathway. Regulates hepatic lipogenesis. The protein is Sterol regulatory element-binding protein 2 of Rattus norvegicus (Rat).